The following is a 413-amino-acid chain: MEQICLIILLISKALSVGAQFNGYNCDANFHSRFPAERDISVYCGVQTITLKINFCPVLFSGYTDTDLALNGRHGDAHCRGFINNNTFPTVVLFSISLATLETCGNALVVSTAQGPNAYGNLSLVQIGNISGYIDTPDPPTIISYLPGLLYKFSCSYPLEYLVNNTQLASSAAAISVKDSNGTFVSTLSLLLYNDSSYVQQLSIPMAGLTLKTRVFAAVKATNLDRRWNVLMDYCYTTASGNPNDELRYDLFFSCDKDPQTTVFENGKSQMGRFAFEVFRFVKHKNQKMSTVFLHCVTKLCRADDCPMLMPICGSRKKRDVSERTESNSASGNAIITAGPIITRSDDTPMNNSQLAQLNSPVFRMNTVTSALISGIIILGVMSLCFFILSLTLLKGKRAPPTILSGARNPAFN.

The first 19 residues, 1 to 19, serve as a signal peptide directing secretion; the sequence is MEQICLIILLISKALSVGA. Gln20 carries the post-translational modification Pyrrolidone carboxylic acid. Residues 20–370 are Extracellular-facing; that stretch reads QFNGYNCDAN…PVFRMNTVTS (351 aa). The 278-residue stretch at 43–320 folds into the ZP domain; sequence YCGVQTITLK…PICGSRKKRD (278 aa). Disulfide bonds link Cys44–Cys155 and Cys79–Cys104. Residues Asn85, Asn121, Asn129, Asn164, Asn181, and Asn194 are each glycosylated (N-linked (GlcNAc...) asparagine). 2 disulfides stabilise this stretch: Cys235/Cys296 and Cys255/Cys313. Asn351 carries an N-linked (GlcNAc...) asparagine glycan. Residues 371 to 391 traverse the membrane as a helical segment; sequence ALISGIIILGVMSLCFFILSL. The Cytoplasmic portion of the chain corresponds to 392 to 413; sequence TLLKGKRAPPTILSGARNPAFN.

Post-translationally, proteolytically cleaved before the transmembrane segment to yield the secreted form found in the extracellular matrix of the cupula. N-glycosylated. As to expression, detected in the acellular cupulae of the vestibular organ, and also in support cells adjacent to the cupula (at protein level).

The protein resides in the cytoplasmic vesicle membrane. It localises to the secreted. The protein localises to the extracellular space. Its subcellular location is the extracellular matrix. In terms of biological role, glycoprotein which is a component of the gelatinous extracellular matrix in the cupulae of the vestibular organ. In Salmo salar (Atlantic salmon), this protein is Zona pellucida-like domain-containing protein 1.